Here is a 97-residue protein sequence, read N- to C-terminus: Serine protease inhibitor Kazal-type 14 (97 aa).

Residues 1–21 form the signal peptide; sequence MAKSFPVFSLLSFILIHLVLS. Residues 34 to 97 enclose the Kazal-like domain; it reads GIIKVKCPYE…RIRFYHDGKC (64 aa). 3 disulfides stabilise this stretch: Cys-40-Cys-79, Cys-57-Cys-76, and Cys-65-Cys-97. Asn-51 carries an N-linked (GlcNAc...) asparagine glycan.

It is found in the secreted. In terms of biological role, may be a serine protease inhibitor. The protein is Serine protease inhibitor Kazal-type 14 (SPINK14) of Homo sapiens (Human).